The primary structure comprises 154 residues: UPF0756 membrane protein RBAM_026200 (154 aa).

4 helical membrane passes run 14–34 (AIALVAKNQSLLFAVGFLIVI), 54–74 (WGVTVITIAVLVPIATGDIGF), 87–107 (WIALGAGIAVALIAKNGLTLL), and 117–137 (LVIGTILAVALFGGVAVGPLI).

Belongs to the UPF0756 family.

It localises to the cell membrane. This is UPF0756 membrane protein RBAM_026200 from Bacillus velezensis (strain DSM 23117 / BGSC 10A6 / LMG 26770 / FZB42) (Bacillus amyloliquefaciens subsp. plantarum).